We begin with the raw amino-acid sequence, 348 residues long: Anthranilate phosphoribosyltransferase (348 aa).

Residues Gly80, 83–84, Thr88, 90–93, 108–116, and Ser120 each bind 5-phospho-alpha-D-ribose 1-diphosphate; these read GD, NVST, and KHGNRSVSS. Gly80 is a binding site for anthranilate. Residue Ser92 coordinates Mg(2+). Asn111 is an anthranilate binding site. Arg166 contributes to the anthranilate binding site. The Mg(2+) site is built by Asp224 and Glu225.

It belongs to the anthranilate phosphoribosyltransferase family. In terms of assembly, homodimer. Mg(2+) is required as a cofactor.

It catalyses the reaction N-(5-phospho-beta-D-ribosyl)anthranilate + diphosphate = 5-phospho-alpha-D-ribose 1-diphosphate + anthranilate. It participates in amino-acid biosynthesis; L-tryptophan biosynthesis; L-tryptophan from chorismate: step 2/5. Functionally, catalyzes the transfer of the phosphoribosyl group of 5-phosphorylribose-1-pyrophosphate (PRPP) to anthranilate to yield N-(5'-phosphoribosyl)-anthranilate (PRA). This chain is Anthranilate phosphoribosyltransferase, found in Sorangium cellulosum (strain So ce56) (Polyangium cellulosum (strain So ce56)).